Consider the following 1159-residue polypeptide: WASH complex subunit 5 (1159 aa).

It belongs to the strumpellin family. Component of the WASH complex.

The protein localises to the early endosome. Its function is as follows. Acts at least in part as component of the WASH complex which seems to regulate washc1 nucleation-promoting factor (NPF) activity and is required for its membrane targeting during endosomal sorting. The sequence is that of WASH complex subunit 5 from Xenopus tropicalis (Western clawed frog).